Here is a 256-residue protein sequence, read N- to C-terminus: Hydroxyacylglutathione hydrolase (256 aa).

Positions 55, 57, 59, 60, 113, 130, and 168 each coordinate Zn(2+).

The protein belongs to the metallo-beta-lactamase superfamily. Glyoxalase II family. As to quaternary structure, monomer. Zn(2+) serves as cofactor.

It carries out the reaction an S-(2-hydroxyacyl)glutathione + H2O = a 2-hydroxy carboxylate + glutathione + H(+). Its pathway is secondary metabolite metabolism; methylglyoxal degradation; (R)-lactate from methylglyoxal: step 2/2. In terms of biological role, thiolesterase that catalyzes the hydrolysis of S-D-lactoyl-glutathione to form glutathione and D-lactic acid. This is Hydroxyacylglutathione hydrolase from Psychromonas ingrahamii (strain DSM 17664 / CCUG 51855 / 37).